A 253-amino-acid chain; its full sequence is Small ribosomal subunit protein uS2 (253 aa).

It belongs to the universal ribosomal protein uS2 family.

This is Small ribosomal subunit protein uS2 from Parvibaculum lavamentivorans (strain DS-1 / DSM 13023 / NCIMB 13966).